Here is a 409-residue protein sequence, read N- to C-terminus: Chaetoglobosin A biosynthesis cluster protein C (409 aa).

The HTH CENPB-type domain occupies 51–120 (DLPANSRKLT…VKRQPQLRTR (70 aa)). The H-T-H motif DNA-binding region spans 84–113 (RGVEDMANHLLRERDAPPVGKLWAHNFVKR). 2 disordered regions span residues 243–269 (PTHP…ETRS) and 320–350 (ANEP…QDPL). Residues 255-269 (PWASKTPYNAQETRS) are compositionally biased toward polar residues.

It localises to the nucleus. Functionally, part of the gene cluster that mediates the biosynthesis of chaetoglobosin A which has a unique inhibitory activity against actin polymerization in mammalian cells. Chaetoglobosin A and its intermediates are involved in the morphological differentiation of C.globosum. The first step of the pathway is the synthesis of prochaetoglobosin I via condensation of one acetyl-CoA, 8 malonyl-CoA, and a L-tryptophan molecule by the PKS-NRPS hybrid synthetase cheA, followed by reduction of backbone double bond to install desired geometry by the enoyl reductase cheB. Further multiple oxidation steps performed by the cytochrome P450 monooxygenases cheE and cheG, as well as by the FAD-linked oxidoreductase cheF, lead to the formation of chaetoglobosin A. Depending on the order of action of these reductases, distinct intermediates can be identified. Within the pathway, the cytochrome P450 monooxygenase cheE catalyzes a stereospecific epoxidation on prochaetoglobosin I, cytoglobosin D, and chaetoglobosin J intermediates. The FAD-linked oxidoreductase cheF performs dehydrogenation of the C-20 hydroxyl groups in the 20-dihyrochaetoglobosin A and cytoglobosin D intermediates. Finally, the cytochrome P450 monooxygenase cheG can catalyze the stereospecific dihydroxylation of prochaetoglobosin I and prochaetoglobosin IV at C-19 and C-20, respectively. The Diels-Alderase cheD may play a role in the post-PKS-NRPS biosynthetic steps catalyzing Diels-Alder cyclization. In Chaetomium globosum (strain ATCC 6205 / CBS 148.51 / DSM 1962 / NBRC 6347 / NRRL 1970) (Soil fungus), this protein is Chaetoglobosin A biosynthesis cluster protein C.